A 128-amino-acid polypeptide reads, in one-letter code: Ribonuclease pancreatic (128 aa).

Residues 1 to 23 are disordered; the sequence is AESSAMKFQRQHVDSEGSSSSNA. Residues K7 and R10 each contribute to the substrate site. Catalysis depends on H12, which acts as the Proton acceptor. Intrachain disulfides connect C26/C84, C40/C95, C58/C110, and C65/C72. Residues 41–45, K66, and R85 contribute to the substrate site; that span reads KPVNT. H119 functions as the Proton donor in the catalytic mechanism.

It belongs to the pancreatic ribonuclease family. Monomer. Interacts with and forms tight 1:1 complexes with RNH1. Dimerization of two such complexes may occur. Interaction with RNH1 inhibits this protein. As to expression, pancreas.

It is found in the secreted. The catalysed reaction is an [RNA] containing cytidine + H2O = an [RNA]-3'-cytidine-3'-phosphate + a 5'-hydroxy-ribonucleotide-3'-[RNA].. The enzyme catalyses an [RNA] containing uridine + H2O = an [RNA]-3'-uridine-3'-phosphate + a 5'-hydroxy-ribonucleotide-3'-[RNA].. Endonuclease that catalyzes the cleavage of RNA on the 3' side of pyrimidine nucleotides. Acts on single-stranded and double-stranded RNA. The chain is Ribonuclease pancreatic (RNASE1) from Hydrochoerus hydrochaeris (Capybara).